The chain runs to 339 residues: 5-dehydro-2-deoxygluconokinase (339 aa).

Belongs to the carbohydrate kinase PfkB family.

The catalysed reaction is 5-dehydro-2-deoxy-D-gluconate + ATP = 6-phospho-5-dehydro-2-deoxy-D-gluconate + ADP + H(+). It functions in the pathway polyol metabolism; myo-inositol degradation into acetyl-CoA; acetyl-CoA from myo-inositol: step 5/7. Functionally, catalyzes the phosphorylation of 5-dehydro-2-deoxy-D-gluconate (2-deoxy-5-keto-D-gluconate or DKG) to 6-phospho-5-dehydro-2-deoxy-D-gluconate (DKGP). This Clostridium tetani (strain Massachusetts / E88) protein is 5-dehydro-2-deoxygluconokinase.